Reading from the N-terminus, the 249-residue chain is Basigin (249 aa).

Residues A1 to G82 enclose the Ig-like C2-type domain. At A1–A187 the chain is on the extracellular side. Intrachain disulfides connect C20-C66 and C105-C165. N23, N132, and N166 each carry an N-linked (GlcNAc...) asparagine glycan. Residues P84–T179 form the Ig-like V-type domain. The helical transmembrane segment at A188–I208 threads the bilayer. The Cytoplasmic portion of the chain corresponds to Y209–T249. Residues D216–T249 form a disordered region. Residue T218 is modified to Phosphothreonine. Position 232 is a phosphoserine (S232).

In terms of assembly, homooligomer. Interacts with VEGFA, KDR/VEGFR2, PPIA/CYPA, SLC16A12, SLC16A11, ATP1B2, MAG, L1CAM and AJAP1. Interacts with SLC16A3; interaction mediates SLC16A3 targeting to the plasma membrane. Interacts with SLC16A1; interaction mediates SLC16A1 targeting to the plasma membrane. Interacts with PPIL2; regulates BSG transport to the cell membrane. Interacts with XKR8; promoting its localization at the cell membrane. Interacts with SLC16A6; this interaction mediates targeting to the plasma membrane.

The protein resides in the cell membrane. It localises to the endoplasmic reticulum membrane. The protein localises to the basolateral cell membrane. In terms of biological role, signaling receptor for cyclophilins, essential for PPIA/CYPA and PPIB/CYPB-dependent signaling related to chemotaxis and adhesion of immune cells. Plays an important role in targeting the monocarboxylate transporters SLC16A1/GLUT1, SLC16A3, SLC16A8, SLC16A11 and SLC16A12 to the plasma membrane. Acts as a coreceptor for vascular endothelial growth factor receptor 2 (KDR/VEGFR2) in endothelial cells enhancing its VEGFA-mediated activation and downstream signaling. Promotes angiogenesis through EPAS1/HIF2A-mediated up-regulation of VEGFA and KDR/VEGFR2 in endothelial cells. In Cricetulus griseus (Chinese hamster), this protein is Basigin (BSG).